The sequence spans 466 residues: Asparagine--tRNA ligase (466 aa).

This sequence belongs to the class-II aminoacyl-tRNA synthetase family. Homodimer.

The protein localises to the cytoplasm. It catalyses the reaction tRNA(Asn) + L-asparagine + ATP = L-asparaginyl-tRNA(Asn) + AMP + diphosphate + H(+). This is Asparagine--tRNA ligase from Vibrio parahaemolyticus serotype O3:K6 (strain RIMD 2210633).